The chain runs to 364 residues: Aminomethyltransferase (364 aa).

This sequence belongs to the GcvT family. The glycine cleavage system is composed of four proteins: P, T, L and H.

It carries out the reaction N(6)-[(R)-S(8)-aminomethyldihydrolipoyl]-L-lysyl-[protein] + (6S)-5,6,7,8-tetrahydrofolate = N(6)-[(R)-dihydrolipoyl]-L-lysyl-[protein] + (6R)-5,10-methylene-5,6,7,8-tetrahydrofolate + NH4(+). Functionally, the glycine cleavage system catalyzes the degradation of glycine. The sequence is that of Aminomethyltransferase from Desulforamulus reducens (strain ATCC BAA-1160 / DSM 100696 / MI-1) (Desulfotomaculum reducens).